The sequence spans 345 residues: Fructose-bisphosphate aldolase (345 aa).

Serine 53 contacts D-glyceraldehyde 3-phosphate. The active-site Proton donor is the aspartate 95. Zn(2+)-binding residues include histidine 96, aspartate 131, glutamate 161, and histidine 212. A dihydroxyacetone phosphate-binding site is contributed by glycine 213. Residue histidine 252 coordinates Zn(2+). Residues 253–255 and 274–277 contribute to the dihydroxyacetone phosphate site; these read GGS and NVDT.

Belongs to the class II fructose-bisphosphate aldolase family. Zn(2+) serves as cofactor.

It catalyses the reaction beta-D-fructose 1,6-bisphosphate = D-glyceraldehyde 3-phosphate + dihydroxyacetone phosphate. It functions in the pathway carbohydrate degradation; glycolysis; D-glyceraldehyde 3-phosphate and glycerone phosphate from D-glucose: step 4/4. Functionally, catalyzes the aldol condensation of dihydroxyacetone phosphate (DHAP or glycerone-phosphate) with glyceraldehyde 3-phosphate (G3P) to form fructose 1,6-bisphosphate (FBP) in gluconeogenesis and the reverse reaction in glycolysis. In Mycobacterium leprae (strain TN), this protein is Fructose-bisphosphate aldolase (fba).